Here is a 212-residue protein sequence, read N- to C-terminus: Small ribosomal subunit protein eS1 (212 aa).

It belongs to the eukaryotic ribosomal protein eS1 family.

The sequence is that of Small ribosomal subunit protein eS1 from Staphylothermus marinus (strain ATCC 43588 / DSM 3639 / JCM 9404 / F1).